Reading from the N-terminus, the 187-residue chain is Putative protein YbeM (187 aa).

A CN hydrolase domain is found at M1–P163.

The protein belongs to the carbon-nitrogen hydrolase superfamily. NIT1/NIT2 family.

Its function is as follows. Pseudogene resulting from a nucleotide deletion that introduces a premature stop codon at position 66. This is the C-terminal fragment. The intact protein (AC A0A140NCB4) hydrolyzes deaminated glutathione (dGSH, 2-oxoglutaramate) to alpha-ketoglutarate (alpha-KG) and cysteinylglycine, has less activity against alpha-ketoglutaramate (a-KGM) and no activity on glutathione or L-glutamine. May function as a metabolite repair enzyme. This Escherichia coli (strain K12) protein is Putative protein YbeM (ybeM).